Here is a 247-residue protein sequence, read N- to C-terminus: Ubiquinone biosynthesis O-methyltransferase (247 aa).

4 residues coordinate S-adenosyl-L-methionine: Arg41, Gly72, Asp93, and Met136.

The protein belongs to the methyltransferase superfamily. UbiG/COQ3 family.

The catalysed reaction is a 3-demethylubiquinol + S-adenosyl-L-methionine = a ubiquinol + S-adenosyl-L-homocysteine + H(+). It catalyses the reaction a 3-(all-trans-polyprenyl)benzene-1,2-diol + S-adenosyl-L-methionine = a 2-methoxy-6-(all-trans-polyprenyl)phenol + S-adenosyl-L-homocysteine + H(+). It functions in the pathway cofactor biosynthesis; ubiquinone biosynthesis. Functionally, O-methyltransferase that catalyzes the 2 O-methylation steps in the ubiquinone biosynthetic pathway. In Bartonella quintana (strain Toulouse) (Rochalimaea quintana), this protein is Ubiquinone biosynthesis O-methyltransferase.